We begin with the raw amino-acid sequence, 300 residues long: tRNA pseudouridine synthase B (300 aa).

Asp44 serves as the catalytic Nucleophile.

Belongs to the pseudouridine synthase TruB family. Type 1 subfamily.

It carries out the reaction uridine(55) in tRNA = pseudouridine(55) in tRNA. Its function is as follows. Responsible for synthesis of pseudouridine from uracil-55 in the psi GC loop of transfer RNAs. This is tRNA pseudouridine synthase B from Corynebacterium diphtheriae (strain ATCC 700971 / NCTC 13129 / Biotype gravis).